Consider the following 201-residue polypeptide: Troponin I (201 aa).

Position 1 is an N-acetylalanine (Ala-1). Positions 1–33 (ADKAKAAEEAKKKQDDIDRKKAEVRKRLEEQSL) are enriched in basic and acidic residues. The interval 1–45 (ADKAKAAEEAKKKQDDIDRKKAEVRKRLEEQSLKKQKKGFMTPER) is disordered. Residues 108–117 (IESDKYDVEL) form a troponin T-interaction region. The actin-binding stretch occupies residues 135 to 148 (DLRGKFIKPTLKKV). An N6,N6,N6-trimethyllysine mark is found at Lys-142 and Lys-146. The disordered stretch occupies residues 182–201 (EDDKGATEGDGPAAEEVAAE).

It belongs to the troponin I family.

Functionally, troponin I is the actomyosin ATPase inhibitory subunit present in the thin filament regulatory complex. This Astacus leptodactylus (Turkish narrow-clawed crayfish) protein is Troponin I.